A 633-amino-acid chain; its full sequence is Kelch-like protein diablo (633 aa).

The segment at 1–62 is disordered; it reads MGDLPGSTGG…ARLSHTSEKH (62 aa). Over residues 7 to 25 the composition is skewed to gly residues; that stretch reads STGGGGGVGGGGNGGGGPT. The span at 26–45 shows a compositional bias: low complexity; sequence IAGTNGNSTTGPGSSTGSTG. One can recognise a BTB domain in the interval 80-147; that stretch reads CDVVLNVGGR…CYTAHIIVEE (68 aa). The BACK domain maps to 182–284; sequence CLGIRAFADT…SPKFLVGTVG (103 aa). Kelch repeat units follow at residues 331–377, 379–425, 426–472, 474–519, 521–566, and 567–613; these read VLFA…VLND, LYAV…VLDG, FLYA…VLGG, LYAI…VFNN, IYAV…VVNG, and QLYA…VMRA.

The protein operates within protein modification; protein ubiquitination. In terms of biological role, probable substrate-specific adapter of an E3 ubiquitin-protein ligase complex which mediates the ubiquitination and subsequent proteasomal degradation of target proteins. May have a role in synapse differentiation and growth. The sequence is that of Kelch-like protein diablo from Drosophila ananassae (Fruit fly).